A 249-amino-acid polypeptide reads, in one-letter code: Protein ZPS1 (249 aa).

An N-terminal signal peptide occupies residues 1–20 (MKFSSGKSIIFATIASLALS). N28, N57, N98, and N217 each carry an N-linked (GlcNAc...) asparagine glycan.

This sequence belongs to the ZPS1 family.

The chain is Protein ZPS1 (ZPS1) from Saccharomyces cerevisiae (strain ATCC 204508 / S288c) (Baker's yeast).